We begin with the raw amino-acid sequence, 454 residues long: Chromosomal replication initiator protein DnaA (454 aa).

The tract at residues 1–79 (MSLCLWKQCL…NSPFIKFKVY (79 aa)) is domain I, interacts with DnaA modulators. Residues 79 to 117 (YQTSKEKKFKKNILQKIQNLNAKPIWDKIPIFKKSSHRS) are domain II. Residues 118-334 (NINKKHSFEN…GALNRVIVNA (217 aa)) are domain III, AAA+ region. Residues glycine 162, glycine 164, lysine 165, and threonine 166 each contribute to the ATP site. The interval 335–454 (NFTHRSITVE…FSNLIRTLSV (120 aa)) is domain IV, binds dsDNA.

It belongs to the DnaA family. In terms of assembly, oligomerizes as a right-handed, spiral filament on DNA at oriC.

The protein localises to the cytoplasm. Its function is as follows. Plays an essential role in the initiation and regulation of chromosomal replication. ATP-DnaA binds to the origin of replication (oriC) to initiate formation of the DNA replication initiation complex once per cell cycle. Binds the DnaA box (a 9 base pair repeat at the origin) and separates the double-stranded (ds)DNA. Forms a right-handed helical filament on oriC DNA; dsDNA binds to the exterior of the filament while single-stranded (ss)DNA is stabiized in the filament's interior. The ATP-DnaA-oriC complex binds and stabilizes one strand of the AT-rich DNA unwinding element (DUE), permitting loading of DNA polymerase. After initiation quickly degrades to an ADP-DnaA complex that is not apt for DNA replication. Binds acidic phospholipids. The protein is Chromosomal replication initiator protein DnaA of Buchnera aphidicola subsp. Schizaphis graminum (strain Sg).